The following is a 209-amino-acid chain: Transmembrane emp24 domain-containing protein B (209 aa).

An N-terminal signal peptide occupies residues 1 to 24; the sequence is MNKTNQLINICILVTLFLIGSSSA. At 25–174 the chain is on the lumenal side; the sequence is LTLQVEPKSQ…RDTSESTNAR (150 aa). The region spanning 34–119 is the GOLD domain; that stretch reads QECFYNFIES…AKVVTFTWAS (86 aa). A helical transmembrane segment spans residues 175-195; sequence VVWWTIAEVIVLVVMGVGQIW. Residues 196-209 lie on the Cytoplasmic side of the membrane; that stretch reads YLRKWFDNKSTGRV.

Belongs to the EMP24/GP25L family.

The protein localises to the cytoplasmic vesicle membrane. Functionally, could have a role in the budding of coatomer-coated and other species of coated vesicles. The chain is Transmembrane emp24 domain-containing protein B (empB) from Dictyostelium discoideum (Social amoeba).